Reading from the N-terminus, the 288-residue chain is Thymidylate synthase (288 aa).

Arginine 21 is a dUMP binding site. Histidine 51 is a (6R)-5,10-methylene-5,6,7,8-tetrahydrofolate binding site. A dUMP-binding site is contributed by 150 to 151 (RR). The Nucleophile role is filled by cysteine 170. DUMP-binding positions include 190-193 (RSGD), asparagine 201, and 231-233 (HIY). Aspartate 193 is a (6R)-5,10-methylene-5,6,7,8-tetrahydrofolate binding site. (6R)-5,10-methylene-5,6,7,8-tetrahydrofolate is bound at residue alanine 287.

The protein belongs to the thymidylate synthase family. Bacterial-type ThyA subfamily. Homodimer.

It is found in the cytoplasm. It catalyses the reaction dUMP + (6R)-5,10-methylene-5,6,7,8-tetrahydrofolate = 7,8-dihydrofolate + dTMP. Its pathway is pyrimidine metabolism; dTTP biosynthesis. Functionally, catalyzes the reductive methylation of 2'-deoxyuridine-5'-monophosphate (dUMP) to 2'-deoxythymidine-5'-monophosphate (dTMP) while utilizing 5,10-methylenetetrahydrofolate (mTHF) as the methyl donor and reductant in the reaction, yielding dihydrofolate (DHF) as a by-product. This enzymatic reaction provides an intracellular de novo source of dTMP, an essential precursor for DNA biosynthesis. The chain is Thymidylate synthase from Mycoplasma mobile (strain ATCC 43663 / 163K / NCTC 11711) (Mesomycoplasma mobile).